We begin with the raw amino-acid sequence, 228 residues long: MNNLLRCHQVCKTYQEGELQTQVLKGVSFELKRGELVSIIGSSGSGKSTLLHILGALDDASEGQVEFLGQSLHQLSSNKQAKIRNQHLGFVYQFHHLLADFSALENVAMPLLIGGMNVAKAKAKAQSLLERVGLGHRVAHRPSELSGGERQRVAIARALVNKPDLVLADEPTGNLDHKTALSIYDLMRELNRESGTAFLVVTHDGELAAKMDRHMHMKDGLLTDITGA.

Residues 5 to 228 (LRCHQVCKTY…DGLLTDITGA (224 aa)) form the ABC transporter domain. An ATP-binding site is contributed by 41–48 (GSSGSGKS).

Belongs to the ABC transporter superfamily. Lipoprotein translocase (TC 3.A.1.125) family. As to quaternary structure, the complex is composed of two ATP-binding proteins (LolD) and two transmembrane proteins (LolC and LolE).

It localises to the cell inner membrane. Its function is as follows. Part of the ABC transporter complex LolCDE involved in the translocation of mature outer membrane-directed lipoproteins, from the inner membrane to the periplasmic chaperone, LolA. Responsible for the formation of the LolA-lipoprotein complex in an ATP-dependent manner. The chain is Lipoprotein-releasing system ATP-binding protein LolD from Vibrio cholerae serotype O1 (strain ATCC 39315 / El Tor Inaba N16961).